Here is a 399-residue protein sequence, read N- to C-terminus: Ubiquitin-like modifier-activating enzyme 5 (399 aa).

ATP-binding residues include Gly-76, Asp-97, Lys-120, Asn-143, and Asn-177. 2 residues coordinate Zn(2+): Cys-219 and Cys-222. Cys-243 (glycyl thioester intermediate) is an active-site residue. The Zn(2+) site is built by Cys-296 and Cys-301.

It belongs to the ubiquitin-activating E1 family. UBA5 subfamily.

In terms of biological role, E1-like enzyme which activates UFM1. This chain is Ubiquitin-like modifier-activating enzyme 5, found in Drosophila mojavensis (Fruit fly).